A 414-amino-acid chain; its full sequence is Serine hydroxymethyltransferase (414 aa).

(6S)-5,6,7,8-tetrahydrofolate contacts are provided by residues Leu-121 and 125-127 (GHL). Lys-229 bears the N6-(pyridoxal phosphate)lysine mark.

The protein belongs to the SHMT family. As to quaternary structure, homodimer. It depends on pyridoxal 5'-phosphate as a cofactor.

It is found in the cytoplasm. It catalyses the reaction (6R)-5,10-methylene-5,6,7,8-tetrahydrofolate + glycine + H2O = (6S)-5,6,7,8-tetrahydrofolate + L-serine. The protein operates within one-carbon metabolism; tetrahydrofolate interconversion. It functions in the pathway amino-acid biosynthesis; glycine biosynthesis; glycine from L-serine: step 1/1. Its function is as follows. Catalyzes the reversible interconversion of serine and glycine with tetrahydrofolate (THF) serving as the one-carbon carrier. This reaction serves as the major source of one-carbon groups required for the biosynthesis of purines, thymidylate, methionine, and other important biomolecules. Also exhibits THF-independent aldolase activity toward beta-hydroxyamino acids, producing glycine and aldehydes, via a retro-aldol mechanism. The sequence is that of Serine hydroxymethyltransferase from Polynucleobacter asymbioticus (strain DSM 18221 / CIP 109841 / QLW-P1DMWA-1) (Polynucleobacter necessarius subsp. asymbioticus).